The chain runs to 271 residues: ATP synthase subunit a (271 aa).

5 consecutive transmembrane segments (helical) span residues 40–60 (TINI…LVLF), 100–120 (LIAP…LMDL), 146–166 (DVNV…FYSI), 220–240 (LIFI…LNVP), and 242–262 (AIFH…LTIV).

Belongs to the ATPase A chain family. In terms of assembly, F-type ATPases have 2 components, CF(1) - the catalytic core - and CF(0) - the membrane proton channel. CF(1) has five subunits: alpha(3), beta(3), gamma(1), delta(1), epsilon(1). CF(0) has three main subunits: a(1), b(2) and c(9-12). The alpha and beta chains form an alternating ring which encloses part of the gamma chain. CF(1) is attached to CF(0) by a central stalk formed by the gamma and epsilon chains, while a peripheral stalk is formed by the delta and b chains.

It is found in the cell inner membrane. In terms of biological role, key component of the proton channel; it plays a direct role in the translocation of protons across the membrane. The polypeptide is ATP synthase subunit a (Shigella dysenteriae serotype 1 (strain Sd197)).